The chain runs to 145 residues: MDKRITLIGSKIAKTGNEFIYCGVLEECSECRFKKICHDGLIVGKRYRIVSVRSAKHPCIAYGDGVKVIEVEPSNNFTILIESKKALEGLTLSHSDIQCNNILCKYYNLCHSEGMPEKYKIMELHEKIKCPKGNSLIKATVSTIN.

Belongs to the UPF0179 family.

The chain is UPF0179 protein Maeo_1037 from Methanococcus aeolicus (strain ATCC BAA-1280 / DSM 17508 / OCM 812 / Nankai-3).